The primary structure comprises 177 residues: Adenine phosphoribosyltransferase (177 aa).

This sequence belongs to the purine/pyrimidine phosphoribosyltransferase family. As to quaternary structure, homodimer.

Its subcellular location is the cytoplasm. It catalyses the reaction AMP + diphosphate = 5-phospho-alpha-D-ribose 1-diphosphate + adenine. It participates in purine metabolism; AMP biosynthesis via salvage pathway; AMP from adenine: step 1/1. In terms of biological role, catalyzes a salvage reaction resulting in the formation of AMP, that is energically less costly than de novo synthesis. This chain is Adenine phosphoribosyltransferase, found in Leptospira biflexa serovar Patoc (strain Patoc 1 / Ames).